The chain runs to 208 residues: uncharacterized protein (208 aa).

Residues 126–151 (VGSGSGSDSSSGSTSSPNTVNNYNSD) form a disordered region. Residues 131 to 141 (GSDSSSGSTSS) are compositionally biased toward low complexity.

This is an uncharacterized protein from Dictyostelium discoideum (Social amoeba).